A 233-amino-acid polypeptide reads, in one-letter code: Large ribosomal subunit protein uL1 (233 aa).

The protein belongs to the universal ribosomal protein uL1 family. As to quaternary structure, part of the 50S ribosomal subunit.

In terms of biological role, binds directly to 23S rRNA. The L1 stalk is quite mobile in the ribosome, and is involved in E site tRNA release. Protein L1 is also a translational repressor protein, it controls the translation of the L11 operon by binding to its mRNA. The chain is Large ribosomal subunit protein uL1 from Shewanella amazonensis (strain ATCC BAA-1098 / SB2B).